A 353-amino-acid chain; its full sequence is MVRIIVKNVSKVFKKGKVVALDNVNINIENGERFGILGPSGAGKTTFMRIIAGLDVPSTGELYFDDRLVASNGKLIVPPEDRKIGMVFQTWALYPNLTAFENIAFPLTNMKMSKEEIRKRVEEVAKILDIHHVLNHFPRELSGGQQQRVALARALVKDPSLLLLDEPFSNLDARMRDSARALVKEVQSRLGVTLLVVSHDPADIFAIADRVGVLVKGKLVQVGKPEDLYDNPVSIQVASLIGEINELEGKVTNEGVVIGSLRFPVSVSSDRAIIGIRPEDVKLSKDVIKDDSWILVGKGKVKVIGYQGGLFRITITPLDSEEEIFTYSDHPIHSGEEVLVYVRKDKIKVFEKN.

Residues 4–241 enclose the ABC transporter domain; sequence IIVKNVSKVF…PVSIQVASLI (238 aa). Residues 40–46, glutamine 89, and glutamate 166 each bind ATP; that span reads SGAGKTT.

Belongs to the ABC transporter superfamily. The complex is composed of two ATP-binding proteins (GlcV), two transmembrane proteins (GlcT and GlcU) and a solute-binding protein (GlcS). Forms transient head-to-tail homodimers in the presence of ATP-Mg(2+).

It is found in the cell membrane. The enzyme catalyses D-glucose(out) + ATP + H2O = D-glucose(in) + ADP + phosphate + H(+). In terms of biological role, part of the ABC transporter complex GlcSTUV involved in glucose uptake. Responsible for energy coupling to the transport system. In vitro, as a free subunit, exhibits a constitutive ATPase activity. The sequence is that of Glucose import ATP-binding protein GlcV from Saccharolobus solfataricus (strain ATCC 35092 / DSM 1617 / JCM 11322 / P2) (Sulfolobus solfataricus).